Consider the following 99-residue polypeptide: Class II hydrophobin 3 (99 aa).

The first 18 residues, 1–18 (MRIDILATAALLAQLASA), serve as a signal peptide directing secretion. 3 cysteine pairs are disulfide-bonded: cysteine 31–cysteine 79, cysteine 40–cysteine 70, and cysteine 41–cysteine 53.

Belongs to the cerato-ulmin hydrophobin family. Homodimer. Homodimers further self-assemble to form highly ordered films at water-air interfaces through intermolecular interactions.

It localises to the secreted. It is found in the cell wall. Its function is as follows. Aerial growth, conidiation, and dispersal of filamentous fungi in the environment rely upon a capability of their secreting small amphipathic proteins called hydrophobins (HPBs) with low sequence identity. Class I can self-assemble into an outermost layer of rodlet bundles on aerial cell surfaces, conferring cellular hydrophobicity that supports fungal growth, development and dispersal; whereas Class II form highly ordered films at water-air interfaces through intermolecular interactions but contribute nothing to the rodlet structure. Hyd3 is a class II hydrophobin required for barley root colonization. Hyd1 and Hyd3 are jointly required for conidial hydrophobicity and dispersal, but seem not to be involved in mycelia hydrophobicity. Inhibits conidial germination in environments not suitable for mycelial growth. Plays probably a role in intraspecific signaling or hyphal fusion. This Bionectria ochroleuca (Gliocladium roseum) protein is Class II hydrophobin 3.